Here is a 291-residue protein sequence, read N- to C-terminus: Phosphoribulokinase (291 aa).

12-20 (GSSGAGTTS) provides a ligand contact to ATP.

Belongs to the phosphoribulokinase family. Homooctamer.

The enzyme catalyses D-ribulose 5-phosphate + ATP = D-ribulose 1,5-bisphosphate + ADP + H(+). It participates in carbohydrate biosynthesis; Calvin cycle. This chain is Phosphoribulokinase (cbbP), found in Xanthobacter flavus.